The primary structure comprises 218 residues: Runt-related transcription factor 2 (218 aa).

Residues 67 to 195 (RGHKFYLEKK…TVDGPREPRR (129 aa)) enclose the Runt domain. The segment at 122–138 (VMAGNDENYSAELRNAS) is required for interaction with FOXO1. The segment at 189-218 (GPREPRRHRQKLDDSKPSLFSDRLSDLGRI) is disordered. Lys204 participates in a covalent cross-link: Glycyl lysine isopeptide (Lys-Gly) (interchain with G-Cter in SUMO2).

In terms of assembly, heterodimer of an alpha and a beta subunit. The alpha subunit binds DNA as a monomer and through the Runt domain. DNA-binding is increased by heterodimerization. Interacts with XRCC6 (Ku70) and XRCC5 (Ku80). Interacts with CCNB1, KAT6A and KAT6B. Interacts with HIVEP3. Interacts with IFI204. Interaction with SATB2; the interaction results in enhanced DNA binding and transactivation by these transcription factors. Binds to HIPK3. Interacts with FOXO1 (via a C-terminal region); the interaction inhibits RUNX2 transcriptional activity towards BGLAP. Interacts with FOXP3. Interacts with TMEM119. Interacts with OLFM2. Interacts with IPO7; the interaction inhibits RUNX2 nuclear translocation in osteoblasts. Phosphorylated; probably by MAP kinases (MAPK). Phosphorylation by HIPK3 is required for the SPEN/MINT and FGF2 transactivation during osteoblastic differentiation.

It localises to the nucleus. Its subcellular location is the cytoplasm. Its function is as follows. Transcription factor involved in osteoblastic differentiation and skeletal morphogenesis. Essential for the maturation of osteoblasts and both intramembranous and endochondral ossification. CBF binds to the core site, 5'-PYGPYGGT-3', of a number of enhancers and promoters, including murine leukemia virus, polyomavirus enhancer, T-cell receptor enhancers, osteocalcin, osteopontin, bone sialoprotein, alpha 1(I) collagen, LCK, IL-3 and GM-CSF promoters. Inhibits KAT6B-dependent transcriptional activation. In osteoblasts, supports transcription activation: synergizes with SPEN/MINT to enhance FGFR2-mediated activation of the osteocalcin FGF-responsive element (OCFRE). The chain is Runt-related transcription factor 2 (Runx2) from Rattus norvegicus (Rat).